We begin with the raw amino-acid sequence, 363 residues long: uncharacterized protein (363 aa).

Positions methionine 1–alanine 20 are cleaved as a signal peptide.

The protein belongs to the fimbrial protein family.

It is found in the fimbrium. In terms of biological role, part of the yraHIJK fimbrial operon. Could contribute to adhesion to various surfaces in specific environmental niches. Increases adhesion to eukaryotic T24 bladder epithelial cells in the absence of fim operon. This is an uncharacterized protein from Escherichia coli (strain K12).